The sequence spans 915 residues: Transferrin-binding protein A (915 aa).

The N-terminal stretch at 1 to 24 is a signal peptide; sequence MQQQHLFRLNILCLSLMTALPAYA. The short motif at 38–45 is the TonB box element; sequence DTIQVKAK. Positions 51–176 constitute a TBDR plug domain; that stretch reads RDNEVTGLGK…LAGSVAFQTK (126 aa). Positions 187–915 constitute a TBDR beta-barrel domain; sequence QWGIQSKTAY…NYTFSLEMKF (729 aa). The span at 526–540 shows a compositional bias: polar residues; the sequence is LKTPPQNNGKKTSPN. The segment at 526–545 is disordered; sequence LKTPPQNNGKKTSPNGREKN. Positions 898–915 match the TonB C-terminal box motif; it reads NRYAAPGRNYTFSLEMKF.

The protein belongs to the TonB-dependent receptor family. Binds both human apo- and holo-transferrin (TF), via the TF C-terminus. Forms a large complex with TF and TbpB.

The protein localises to the cell outer membrane. In terms of biological role, neisseria acquires iron by extracting it from serum transferrin (TF) in its human host. Acts as a TF receptor and is required for TF utilization. Binds both apo- and holo-TF, via the TF C-terminus. This is Transferrin-binding protein A from Neisseria gonorrhoeae.